The sequence spans 214 residues: Adenylate kinase (214 aa).

10–15 serves as a coordination point for ATP; it reads GSGKGT. The tract at residues 30–59 is NMP; that stretch reads STGDMLRAAVREGTPLGMEAKKIMDAGQLV. AMP is bound by residues T31, R36, 57-59, 85-88, and Q92; these read QLV and GFPR. An LID region spans residues 122–159; sequence GRRVHPASGRTYHVVFNPPKVEGRDDETGEPLVQREDD. ATP-binding positions include R123 and 132–133; that span reads TY. AMP contacts are provided by R156 and R167. An ATP-binding site is contributed by G200.

This sequence belongs to the adenylate kinase family. As to quaternary structure, monomer.

The protein localises to the cytoplasm. The catalysed reaction is AMP + ATP = 2 ADP. It participates in purine metabolism; AMP biosynthesis via salvage pathway; AMP from ADP: step 1/1. Functionally, catalyzes the reversible transfer of the terminal phosphate group between ATP and AMP. Plays an important role in cellular energy homeostasis and in adenine nucleotide metabolism. The sequence is that of Adenylate kinase from Methylococcus capsulatus (strain ATCC 33009 / NCIMB 11132 / Bath).